We begin with the raw amino-acid sequence, 58 residues long: MAVPKRRTSKTRKNKRRTHFKISVPGMTECPNCGREYKLSHRVCKNCGSYNGEEVAAK.

It belongs to the bacterial ribosomal protein bL32 family.

The protein is Large ribosomal subunit protein bL32 of Staphylococcus aureus (strain NCTC 8325 / PS 47).